We begin with the raw amino-acid sequence, 492 residues long: 3-octaprenyl-4-hydroxybenzoate carboxy-lyase (492 aa).

Residue Asn175 coordinates Mn(2+). Residues 178–180 (IYR), 192–194 (RWL), and 197–198 (RG) each bind prenylated FMN. Glu241 lines the Mn(2+) pocket. The active-site Proton donor is the Asp290.

It belongs to the UbiD family. Homohexamer. Prenylated FMN serves as cofactor. Mn(2+) is required as a cofactor.

It localises to the cell membrane. The catalysed reaction is a 4-hydroxy-3-(all-trans-polyprenyl)benzoate + H(+) = a 2-(all-trans-polyprenyl)phenol + CO2. Its pathway is cofactor biosynthesis; ubiquinone biosynthesis. In terms of biological role, catalyzes the decarboxylation of 3-octaprenyl-4-hydroxy benzoate to 2-octaprenylphenol, an intermediate step in ubiquinone biosynthesis. This is 3-octaprenyl-4-hydroxybenzoate carboxy-lyase from Salmonella paratyphi A (strain ATCC 9150 / SARB42).